We begin with the raw amino-acid sequence, 218 residues long: Cytochrome b6 (218 aa).

The chain crosses the membrane as a helical span at residues 35-55; the sequence is IFYCLGGITLVCFLIQFATGF. C38 provides a ligand contact to heme c. 2 residues coordinate heme b: H89 and H103. A run of 3 helical transmembrane segments spans residues 93–113, 119–139, and 189–209; these read ASMM…TGGF, LTWV…VTGY, and LHTF…FLMI. Heme b is bound by residues H190 and H205.

This sequence belongs to the cytochrome b family. PetB subfamily. As to quaternary structure, the 4 large subunits of the cytochrome b6-f complex are cytochrome b6, subunit IV (17 kDa polypeptide, PetD), cytochrome f and the Rieske protein, while the 4 small subunits are PetG, PetL, PetM and PetN. The complex functions as a dimer. Requires heme b as cofactor. Heme c serves as cofactor.

It localises to the cellular thylakoid membrane. Component of the cytochrome b6-f complex, which mediates electron transfer between photosystem II (PSII) and photosystem I (PSI), cyclic electron flow around PSI, and state transitions. This is Cytochrome b6 from Synechococcus sp. (strain CC9311).